Reading from the N-terminus, the 412-residue chain is Inositol polyphosphate-5-phosphatase A (412 aa).

Residue Cys-409 is the site of S-farnesyl cysteine attachment. Positions 410–412 (VVQ) are cleaved as a propeptide — removed in mature form.

Belongs to the inositol 1,4,5-trisphosphate 5-phosphatase type I family. In terms of assembly, interacts with TASOR. In terms of processing, isoprenylation at Cys-409 is required for localization at the membrane. Predominantly expressed in heart, brain, and skeletal muscle. In brain; high level in Purkinje cells.

It is found in the cell membrane. The protein resides in the cell projection. It localises to the dendrite. It carries out the reaction 1D-myo-inositol 1,4,5-trisphosphate + H2O = 1D-myo-inositol 1,4-bisphosphate + phosphate. The catalysed reaction is 1D-myo-inositol 1,3,4,5-tetrakisphosphate + H2O = 1D-myo-inositol 1,3,4-trisphosphate + phosphate. Its function is as follows. Phosphatase that specifically hydrolyzes the 5-phosphate of inositol 1,4,5-trisphosphate to inositol 1,4-bisphosphate, and inositol 1,3,4,5-tetrasphosphate to inositol 1,3,4-trisphosphate. Plays a crucial role in the survival of cerebellar Purkinje cells. The chain is Inositol polyphosphate-5-phosphatase A from Homo sapiens (Human).